The following is a 406-amino-acid chain: Glucose-6-phosphate isomerase (406 aa).

The Proton donor role is filled by Glu-259. Active-site residues include His-284 and Lys-397.

This sequence belongs to the GPI family.

The protein resides in the cytoplasm. The catalysed reaction is alpha-D-glucose 6-phosphate = beta-D-fructose 6-phosphate. The protein operates within carbohydrate biosynthesis; gluconeogenesis. It functions in the pathway carbohydrate degradation; glycolysis; D-glyceraldehyde 3-phosphate and glycerone phosphate from D-glucose: step 2/4. Catalyzes the reversible isomerization of glucose-6-phosphate to fructose-6-phosphate. This is Glucose-6-phosphate isomerase from Campylobacter jejuni subsp. jejuni serotype O:2 (strain ATCC 700819 / NCTC 11168).